The following is a 94-amino-acid chain: DNA-directed RNA polymerase subunit omega (94 aa).

It belongs to the RNA polymerase subunit omega family. As to quaternary structure, the RNAP catalytic core consists of 2 alpha, 1 beta, 1 beta' and 1 omega subunit. When a sigma factor is associated with the core the holoenzyme is formed, which can initiate transcription.

The catalysed reaction is RNA(n) + a ribonucleoside 5'-triphosphate = RNA(n+1) + diphosphate. Its function is as follows. Promotes RNA polymerase assembly. Latches the N- and C-terminal regions of the beta' subunit thereby facilitating its interaction with the beta and alpha subunits. The protein is DNA-directed RNA polymerase subunit omega of Photobacterium profundum (strain SS9).